A 576-amino-acid polypeptide reads, in one-letter code: MGNNCVGPSAAGQNGFFANVALWRPRPADAAPPALPPPSSAPSDQAPEPVTIPPSEHSSHHSSRSTDPSTPTSAAEQPANKAAPKVKRVQSAGLLADSVLKRDVNTARLKDLYTIGKKLGQGQFGTTYLCVEKATGREFACKSIAKRKLLTQEDVEDVRREIQIMHHLAGHANVVSIVGAYEDAVAVQLVMELCAGGELFDRIIQRGHYSEKAAAQLARVIVGVIEACHSLGVMHRDLKPENFLFIHQKEDSPLKAIDFGLSIFFKPGETFTDVVGSPYYVAPEVLMKHYGREVDVWSAGVIIYILLSGVPPFWDESEQGIFEQVLKGDLDFSSEPWPNISESAKDLVRKMLIRDPKKRLTAHEALCHPWVCVDGVAPDKPLDSAVLSRLKQFSAMNKLKKMALRVIAESLSEEEIAGLKEMFKMLDTDNSGHITLEELKTGLQRVGANLMDSEIDALMEAADIDNSGTIDYGEFIAATLHINKVEKEDKLFAAFSYFDKDGSGYITQDELQKACEEFGIGDTRIEDIIGDIDQDNDGRIDYNEFVEMMQKGNNAMGKMGQHSTGNFGLGEALKLR.

G2 carries N-myristoyl glycine lipidation. Residues 27–88 (PADAAPPALP…ANKAAPKVKR (62 aa)) are disordered. A compositionally biased stretch (low complexity) spans 41 to 56 (APSDQAPEPVTIPPSE). Residues 113 to 371 (YTIGKKLGQG…AHEALCHPWV (259 aa)) form the Protein kinase domain. Residues 119 to 127 (LGQGQFGTT) and K142 each bind ATP. The active-site Proton acceptor is D237. The autoinhibitory domain stretch occupies residues 377–407 (APDKPLDSAVLSRLKQFSAMNKLKKMALRVI). EF-hand domains follow at residues 414–449 (EEIA…VGAN), 450–485 (LMDS…INKV), 486–521 (EKED…FGIG), and 522–555 (DTRI…GNNA). Ca(2+) is bound by residues D427, D429, S431, H433, E438, D463, D465, S467, T469, E474, D499, D501, S503, Y505, E510, D533, D535, D537, R539, and E544.

It belongs to the protein kinase superfamily. Ser/Thr protein kinase family. CDPK subfamily.

The protein resides in the membrane. The enzyme catalyses L-seryl-[protein] + ATP = O-phospho-L-seryl-[protein] + ADP + H(+). It catalyses the reaction L-threonyl-[protein] + ATP = O-phospho-L-threonyl-[protein] + ADP + H(+). Activated by calcium. Autophosphorylation may play an important role in the regulation of the kinase activity. In terms of biological role, may play a role in signal transduction pathways that involve calcium as a second messenger. In Oryza sativa subsp. japonica (Rice), this protein is Calcium-dependent protein kinase 11.